A 384-amino-acid chain; its full sequence is Histone acetyltransferase type B subunit 2 (384 aa).

WD repeat units lie at residues 156-196, 203-243, 247-287, 291-331, and 348-384; these read GHSA…SSIS, RHET…CIHA, AHTS…QPLH, GHSK…AEVP, and GHTS…PQPE.

This sequence belongs to the WD repeat RBAP46/RBAP48/MSI1 family. As to quaternary structure, component of the HAT-B complex.

The protein localises to the cytoplasm. The protein resides in the nucleus. Its function is as follows. Regulatory subunit of the histone acetylase B (HAT-B) complex. The complex acetylates histone H4 which is required for telomeric silencing. The sequence is that of Histone acetyltransferase type B subunit 2 (HAT2) from Encephalitozoon cuniculi (strain GB-M1) (Microsporidian parasite).